We begin with the raw amino-acid sequence, 95 residues long: MSAADKKPLIPPSHITIKIKSQDDICVYFRIKRDVELRTMMQAYSDKVGQQMSAFRFHCDGIRIKPNQTPNELDLEDGDEIDAFVDQIAGFSHRH.

A Ubiquitin-like domain is found at 13–90 (SHITIKIKSQ…IDAFVDQIAG (78 aa)). G90 participates in a covalent cross-link: Glycyl lysine isopeptide (Gly-Lys) (interchain with K-? in acceptor proteins).

This sequence belongs to the ubiquitin family. SUMO subfamily. As to quaternary structure, interacts with SAE2, SCE1, SIZ1 and MMS21 Covalently attached to a number of proteins.

Its subcellular location is the nucleus. It is found in the cytoplasm. In terms of biological role, ubiquitin-like protein which can be covalently attached to target lysines as a monomer. Does not seem to be involved in protein degradation and may function as an antagonist of ubiquitin in the degradation process. This chain is Putative small ubiquitin-related modifier 7 (SUMO7), found in Arabidopsis thaliana (Mouse-ear cress).